The primary structure comprises 421 residues: Core-capsid bridging protein (421 aa).

This sequence belongs to the adenoviridae core-capsid bridging protein family. In terms of assembly, monomer. Homodimer. Exists in equilibrium between monomers and dimers in solution. Interacts with the histone-like nucleoprotein; this interactions bridge the virus core to the capsid. Interacts with core protein X; this interactions bridge the virus core to the capsid. Interacts with the endosome lysis protein VI; this interactions bridge the virus core to the capsid. Interacts with the peripentonal hexons. Interacts with host NPM1; this interaction might play a role in virus assembly.

It is found in the virion. It localises to the host nucleus. The protein resides in the host nucleolus. Its function is as follows. Associates loosely with the viral DNA to form an outer shell around the nucleoprotein-DNA complex and links it with the capsid by binding the endosome lysis protein. Dissociates from the viral genome during entry. Might be involved in nuclear capsid assembly of the viral particles through its association with NPM1/nucleophosmin. The protein is Core-capsid bridging protein of Canine adenovirus serotype 1 (strain CLL) (CAdV-1).